The following is a 379-amino-acid chain: Chaperone protein DnaJ (379 aa).

Residues 4 to 69 (DLYETLGVKK…QKRAAYDRYG (66 aa)) form the J domain. The CR-type zinc finger occupies 137 to 215 (GKTAQIRVPT…CHGQGRVTEE (79 aa)). Zn(2+) contacts are provided by C150, C153, C167, C170, C189, C192, C203, and C206. CXXCXGXG motif repeat units follow at residues 150–157 (CDVCTGSG), 167–174 (CATCQGSG), 189–196 (CPTCGGRG), and 203–210 (CTKCHGQG).

This sequence belongs to the DnaJ family. Homodimer. Zn(2+) is required as a cofactor.

It localises to the cytoplasm. Participates actively in the response to hyperosmotic and heat shock by preventing the aggregation of stress-denatured proteins and by disaggregating proteins, also in an autonomous, DnaK-independent fashion. Unfolded proteins bind initially to DnaJ; upon interaction with the DnaJ-bound protein, DnaK hydrolyzes its bound ATP, resulting in the formation of a stable complex. GrpE releases ADP from DnaK; ATP binding to DnaK triggers the release of the substrate protein, thus completing the reaction cycle. Several rounds of ATP-dependent interactions between DnaJ, DnaK and GrpE are required for fully efficient folding. Also involved, together with DnaK and GrpE, in the DNA replication of plasmids through activation of initiation proteins. In Sinorhizobium fredii (strain NBRC 101917 / NGR234), this protein is Chaperone protein DnaJ.